We begin with the raw amino-acid sequence, 268 residues long: MVNVVVTGAAGRMGTQIVRLVAAAEGLKLTGAVERPGHAGQDAGALAGIPPLGVAVVDDLAGALAGADVVIDFTSHEASARNAELCAEKGVALVIGSTGFTPEAKARVAAAAARIPVVFSPNMSVGVNVLFELVRQAAKVLGDAYDVEIVEIHHKRKRDAPSGTAVALGEVAAGALGRDPADALAYTRHGILGERPPWQIGVQTLRGGDVVGEHTVYFCGEGERLELTHRATSREQFARGAVRAAGFIAGKPAGLYDMADVLGLRSAR.

NAD(+)-binding positions include 8–13 and glutamate 34; that span reads GAAGRM. Arginine 35 provides a ligand contact to NADP(+). Residues 96-98 and 120-123 each bind NAD(+); these read GST and SPNM. The Proton donor/acceptor role is filled by histidine 153. (S)-2,3,4,5-tetrahydrodipicolinate is bound at residue histidine 154. The active-site Proton donor is lysine 157. 163–164 lines the (S)-2,3,4,5-tetrahydrodipicolinate pocket; it reads GT.

The protein belongs to the DapB family.

The protein resides in the cytoplasm. It catalyses the reaction (S)-2,3,4,5-tetrahydrodipicolinate + NAD(+) + H2O = (2S,4S)-4-hydroxy-2,3,4,5-tetrahydrodipicolinate + NADH + H(+). The enzyme catalyses (S)-2,3,4,5-tetrahydrodipicolinate + NADP(+) + H2O = (2S,4S)-4-hydroxy-2,3,4,5-tetrahydrodipicolinate + NADPH + H(+). It functions in the pathway amino-acid biosynthesis; L-lysine biosynthesis via DAP pathway; (S)-tetrahydrodipicolinate from L-aspartate: step 4/4. Its function is as follows. Catalyzes the conversion of 4-hydroxy-tetrahydrodipicolinate (HTPA) to tetrahydrodipicolinate. The sequence is that of 4-hydroxy-tetrahydrodipicolinate reductase from Anaeromyxobacter sp. (strain Fw109-5).